We begin with the raw amino-acid sequence, 830 residues long: Histone acetyltransferase KAT2A (830 aa).

A disordered region spans residues 1–94 (MAEPSQAPNP…RKAQVRGLPR (94 aa)). N-acetylalanine is present on Ala2. 2 stretches are compositionally biased toward pro residues: residues 7 to 33 (APNP…PAPS) and 41 to 51 (APTPAPAPAPA). A compositionally biased stretch (gly residues) spans 58-69 (TGSGGAGVGSGG). The segment covering 83-94 (SQRKAQVRGLPR) has biased composition (basic residues). Ser302 is modified (phosphoserine). Over residues 398–417 (SFSPSMGGGSNSSLSLDSAG) the composition is skewed to low complexity. A disordered region spans residues 398-426 (SFSPSMGGGSNSSLSLDSAGTEPMPAGEK). The N-acetyltransferase domain occupies 496–649 (VIGNSLTPKA…GATLMECELN (154 aa)). Lys542 carries the N6-acetyllysine modification. Residue Glu568 is the Proton donor/acceptor of the active site. Acetyl-CoA-binding positions include 572–574 (CAV), 579–585 (QVKGYGT), and Tyr610. Succinyl-CoA is bound by residues 572 to 574 (CAV), 579 to 585 (QVKGYGT), and Tyr610. Lys721 is covalently cross-linked (Glycyl lysine isopeptide (Lys-Gly) (interchain with G-Cter in SUMO2)). The 105-residue stretch at 721 to 825 (KDPDQLYTTL…KFFYFKLKEG (105 aa)) folds into the Bromo domain. The residue at position 728 (Thr728) is a Phosphothreonine. Residues Lys752 and Lys784 each participate in a glycyl lysine isopeptide (Lys-Gly) (interchain with G-Cter in SUMO2) cross-link.

It belongs to the acetyltransferase family. GCN5 subfamily. In terms of assembly, interacts with EP300, CREBBP and ADA2. Component of the TFTC-HAT complex, at least composed of TAF5L, TAF6L, TAF3, TADA3L, SUPT3H/SPT3, TAF2/TAFII150, TAF4/TAFII135, TAF5/TAFII100, KAT2A/GCN5L2, TAF10 and TRRAP. Component of the STAGA transcription coactivator-HAT complex, at least composed of SUPT3H, KAT2A, SUPT7L, TAF5L, TAF6L, TADA3L, TAD1L, TAF10, TAF12, TRRAP and TAF9. The STAGA core complex is associated with a subcomplex required for histone deubiquitination composed of ATXN7L3, ENY2 and USP22. Component of the ADA2A-containing complex (ATAC), composed of KAT14, KAT2A, TADA2L, TADA3L, ZZ3, MBIP, WDR5, YEATS2, CCDC101 and DR1. In the complex, it probably interacts directly with KAT14, MBIP and WDR5. Interacts with PML. Interacts with CEBPB. Interacts with TACC1, TACC2 and TACC3. Interacts with RELA. Interacts with NFATC2. Interacts with TBX5. Interacts with PLK4. Associates with the 2-oxoglutarate dehydrogenase complex. Interacts with XPC; leading to KAT2A recruitment to promoters and subsequent acetylation of histones. Interacts with ERCC3/XPB; leading to KAT2A recruitment to promoters and subsequent acetylation of histones. Interacts with ISL1. Interactions of ISL1 with MLIP1 or KAT2A may be mutually exclusive. Post-translationally, acetylated at Lys-542, inhibiting the protein acetyltransferase activity. Deacetylation at Lys-542 by SIRT6 promotes phosphorylation at Ser-302 and Thr-728 and subsequent activation of the protein acetyltransferase activity, leading to acetylation and inactivation of PPARGC1A. As to expression, in brain, highly expressed in the hippocampal CA1 region (at protein level). Also expressed in the hippocampal subregions CA3 and the dentate gyrus as well as in the cortex and prefrontal cortex. Expressed at low level in the cerebellum.

The protein resides in the nucleus. It localises to the chromosome. Its subcellular location is the cytoplasm. The protein localises to the cytoskeleton. It is found in the microtubule organizing center. The protein resides in the centrosome. The catalysed reaction is L-lysyl-[histone] + acetyl-CoA = N(6)-acetyl-L-lysyl-[histone] + CoA + H(+). It catalyses the reaction L-lysyl-[protein] + acetyl-CoA = N(6)-acetyl-L-lysyl-[protein] + CoA + H(+). The enzyme catalyses succinyl-CoA + L-lysyl-[protein] = N(6)-succinyl-L-lysyl-[protein] + CoA + H(+). It carries out the reaction glutaryl-CoA + L-lysyl-[protein] = N(6)-glutaryl-L-lysyl-[protein] + CoA + H(+). In terms of biological role, protein lysine acyltransferase that can act as a acetyltransferase, glutaryltransferase, succinyltransferase or malonyltransferase, depending on the context. Acts as a histone lysine succinyltransferase: catalyzes succinylation of histone H3 on 'Lys-79' (H3K79succ), with a maximum frequency around the transcription start sites of genes. Succinylation of histones gives a specific tag for epigenetic transcription activation. Association with the 2-oxoglutarate dehydrogenase complex, which provides succinyl-CoA, is required for histone succinylation. In different complexes, functions either as an acetyltransferase (HAT) or as a succinyltransferase: in the SAGA and ATAC complexes, acts as a histone acetyltransferase. Has significant histone acetyltransferase activity with core histones, but not with nucleosome core particles. Has a a strong preference for acetylation of H3 at 'Lys-9' (H3K9ac). Acetylation of histones gives a specific tag for epigenetic transcription activation. Recruited by the XPC complex at promoters, where it specifically mediates acetylation of histone variant H2A.Z.1/H2A.Z, thereby promoting expression of target genes. Involved in long-term memory consolidation and synaptic plasticity: acts by promoting expression of a hippocampal gene expression network linked to neuroactive receptor signaling. Acts as a positive regulator of T-cell activation: upon TCR stimulation, recruited to the IL2 promoter following interaction with NFATC2 and catalyzes acetylation of histone H3 at 'Lys-9' (H3K9ac), leading to promote IL2 expression. Required for growth and differentiation of craniofacial cartilage and bone by regulating acetylation of histone H3 at 'Lys-9' (H3K9ac). Regulates embryonic stem cell (ESC) pluripotency and differentiation. Also acetylates non-histone proteins, such as CEBPB, MRE11, PPARGC1A, PLK4 and TBX5. Involved in heart and limb development by mediating acetylation of TBX5, acetylation regulating nucleocytoplasmic shuttling of TBX5. Acts as a negative regulator of centrosome amplification by mediating acetylation of PLK4. Acts as a negative regulator of gluconeogenesis by mediating acetylation and subsequent inactivation of PPARGC1A. Also acts as a histone glutaryltransferase: catalyzes glutarylation of histone H4 on 'Lys-91' (H4K91glu), a mark that destabilizes nucleosomes by promoting dissociation of the H2A-H2B dimers from nucleosomes. This chain is Histone acetyltransferase KAT2A, found in Mus musculus (Mouse).